A 243-amino-acid chain; its full sequence is tRNA (guanine-N(1)-)-methyltransferase (243 aa).

Residues glycine 108 and 127–132 contribute to the S-adenosyl-L-methionine site; that span reads LGDFVL.

Belongs to the RNA methyltransferase TrmD family. As to quaternary structure, homodimer.

The protein localises to the cytoplasm. The catalysed reaction is guanosine(37) in tRNA + S-adenosyl-L-methionine = N(1)-methylguanosine(37) in tRNA + S-adenosyl-L-homocysteine + H(+). Its function is as follows. Specifically methylates guanosine-37 in various tRNAs. This Streptococcus equi subsp. equi (strain 4047) protein is tRNA (guanine-N(1)-)-methyltransferase.